A 395-amino-acid chain; its full sequence is Phosphoglycerate kinase (395 aa).

Substrate contacts are provided by residues 20 to 22, Arg36, 59 to 62, Arg120, and Arg157; these read DFN and HLGR. ATP is bound by residues Lys208, Gly296, Glu327, and 353–356; that span reads GGDT.

This sequence belongs to the phosphoglycerate kinase family. As to quaternary structure, monomer.

The protein resides in the cytoplasm. The enzyme catalyses (2R)-3-phosphoglycerate + ATP = (2R)-3-phospho-glyceroyl phosphate + ADP. The protein operates within carbohydrate degradation; glycolysis; pyruvate from D-glyceraldehyde 3-phosphate: step 2/5. The sequence is that of Phosphoglycerate kinase from Tropheryma whipplei (strain TW08/27) (Whipple's bacillus).